A 283-amino-acid polypeptide reads, in one-letter code: Protein FdhE homolog (283 aa).

Belongs to the FdhE family.

The protein resides in the cytoplasm. Necessary for formate dehydrogenase activity. This is Protein FdhE homolog from Aquifex aeolicus (strain VF5).